Reading from the N-terminus, the 473-residue chain is Nuclear distribution protein PAC1 (473 aa).

The region spanning 9–41 (QAEELHKSIIAYFLSAKLPKSAAALREEIADSV) is the LisH domain. Residues 60-87 (TSVVRLQKKIMDLEARNSALQSELDSAT) adopt a coiled-coil conformation. Residues 80–93 (QSELDSATPTSLSR) are compositionally biased toward polar residues. The tract at residues 80-99 (QSELDSATPTSLSRRNQDPV) is disordered. 8 WD repeats span residues 113–154 (SHRN…RTIK), 156–196 (HTRA…KNIR), 200–247 (GHDH…CVRT), 250–289 (GHVEWVRDVVPSPDGRFLFSAGDDRVARLWDVSSGETKST), 292–352 (GHEH…IKTL), 354–393 (GHDNWVRALVFHPGGKYLLSVSDDKTIRCWDLSQEFKCVR), 397–434 (DAHAFVTCIRWAPNIIKDAGGMGVNGDINGGGSLALSG), and 435–472 (VNGIIPGSKKEDPGGGAKLGIRCVIATGSVDLNVRVFA).

Belongs to the WD repeat LIS1/nudF family. As to quaternary structure, self-associates. Interacts with NDL1 and dynein.

It localises to the cytoplasm. The protein resides in the cytoskeleton. Its subcellular location is the spindle pole. In terms of biological role, positively regulates the activity of the minus-end directed microtubule motor protein dynein. May enhance dynein-mediated microtubule sliding by targeting dynein to the microtubule plus end. Required for nuclear migration during vegetative growth as well as development. Required for retrograde early endosome (EE) transport from the hyphal tip. Required for localization of dynein to the mitotic spindle poles. Recruits additional proteins to the dynein complex at SPBs. This is Nuclear distribution protein PAC1 from Ajellomyces dermatitidis (strain ER-3 / ATCC MYA-2586) (Blastomyces dermatitidis).